The following is a 510-amino-acid chain: Inositol-3-phosphate synthase (510 aa).

Positions 70, 71, 72, 73, 143, 180, 190, 193, 230, 231, 232, 233, 281, 282, 306, 309, 340, 341, 342, 355, 393, 394, 422, and 423 each coordinate NAD(+).

Belongs to the myo-inositol 1-phosphate synthase family. Requires NAD(+) as cofactor.

The protein localises to the cytoplasm. The protein resides in the cytosol. It is found in the nucleus. It catalyses the reaction D-glucose 6-phosphate = 1D-myo-inositol 3-phosphate. Its pathway is polyol metabolism; myo-inositol biosynthesis; myo-inositol from D-glucose 6-phosphate: step 1/2. Its function is as follows. Key enzyme in myo-inositol biosynthesis pathway that catalyzes the conversion of glucose 6-phosphate to 1-myo-inositol 1-phosphate in a NAD-dependent manner. This chain is Inositol-3-phosphate synthase, found in Nicotiana tabacum (Common tobacco).